The primary structure comprises 39 residues: Photosystem II reaction center protein J (39 aa).

The chain crosses the membrane as a helical span at residues 7-27 (IPLWVVAVIAGLGVIAVVGLF).

It belongs to the PsbJ family. As to quaternary structure, PSII is composed of 1 copy each of membrane proteins PsbA, PsbB, PsbC, PsbD, PsbE, PsbF, PsbH, PsbI, PsbJ, PsbK, PsbL, PsbM, PsbT, PsbX, PsbY, PsbZ, Psb30/Ycf12, peripheral proteins PsbO, CyanoQ (PsbQ), PsbU, PsbV and a large number of cofactors. It forms dimeric complexes.

It is found in the cellular thylakoid membrane. In terms of biological role, one of the components of the core complex of photosystem II (PSII). PSII is a light-driven water:plastoquinone oxidoreductase that uses light energy to abstract electrons from H(2)O, generating O(2) and a proton gradient subsequently used for ATP formation. It consists of a core antenna complex that captures photons, and an electron transfer chain that converts photonic excitation into a charge separation. The protein is Photosystem II reaction center protein J of Gloeothece citriformis (strain PCC 7424) (Cyanothece sp. (strain PCC 7424)).